Consider the following 286-residue polypeptide: MNFRQLIFKILYNENNMKKFLLKPKKSLGQNFILSSEITKKIVALAGSLENFNVIEIGPGYGALTREILVHNPKSLLSIEKDRDLVKHHDQLLNEHQGKYRIIEADALHIIEEELIERPVKVIANLPYNISVALFLKWLDSIKFFTSLTLMFQKEVADRITARPNSKDYGPLSVLSQLLCDIKKEFDIEPKEFFPRPKIHSSVITVNPLPTPKFVVNLETLIKLIRAVFAQRRKMLRNSLQNITNHAETVLENAKLSGNERPENLTIEQFCLLANNVECLLCNKMY.

Residues Asn31, Ile33, Gly58, Glu80, Asp106, and Asn125 each contribute to the S-adenosyl-L-methionine site.

This sequence belongs to the class I-like SAM-binding methyltransferase superfamily. rRNA adenine N(6)-methyltransferase family. RsmA subfamily.

It localises to the cytoplasm. It carries out the reaction adenosine(1518)/adenosine(1519) in 16S rRNA + 4 S-adenosyl-L-methionine = N(6)-dimethyladenosine(1518)/N(6)-dimethyladenosine(1519) in 16S rRNA + 4 S-adenosyl-L-homocysteine + 4 H(+). Specifically dimethylates two adjacent adenosines (A1518 and A1519) in the loop of a conserved hairpin near the 3'-end of 16S rRNA in the 30S particle. May play a critical role in biogenesis of 30S subunits. This chain is Ribosomal RNA small subunit methyltransferase A, found in Wolbachia pipientis wMel.